The primary structure comprises 380 residues: Cytochrome b (380 aa).

4 helical membrane-spanning segments follow: residues 34-54, 78-99, 114-134, and 179-199; these read FGSL…LLAM, WLIR…YLHI, WNTG…GYVL, and FFAL…VHLT. Heme b-binding residues include His84 and His98. His183 and His197 together coordinate heme b. Residue His202 coordinates a ubiquinone. Helical transmembrane passes span 227-247, 289-309, 321-341, and 348-368; these read LKDI…ALFS, LGGV…PFLH, LSQL…WVGS, and FIII…ILFP.

The protein belongs to the cytochrome b family. The cytochrome bc1 complex contains 11 subunits: 3 respiratory subunits (MT-CYB, CYC1 and UQCRFS1), 2 core proteins (UQCRC1 and UQCRC2) and 6 low-molecular weight proteins (UQCRH/QCR6, UQCRB/QCR7, UQCRQ/QCR8, UQCR10/QCR9, UQCR11/QCR10 and a cleavage product of UQCRFS1). This cytochrome bc1 complex then forms a dimer. Requires heme b as cofactor.

The protein resides in the mitochondrion inner membrane. In terms of biological role, component of the ubiquinol-cytochrome c reductase complex (complex III or cytochrome b-c1 complex) that is part of the mitochondrial respiratory chain. The b-c1 complex mediates electron transfer from ubiquinol to cytochrome c. Contributes to the generation of a proton gradient across the mitochondrial membrane that is then used for ATP synthesis. This Procellaria westlandica (Westland petrel) protein is Cytochrome b (MT-CYB).